Consider the following 240-residue polypeptide: Keratinocyte-associated protein 3 (240 aa).

4 helical membrane passes run 21-41 (VGLALILVGHVNLLLGAVLHG), 63-83 (VISVGSGLLSVSVGLVALLAS), 94-114 (VLLALALVNLLLSVACSLGLL), and 163-183 (ALALWIPSLLMSAGEAALSGY).

The protein belongs to the TMEM54 family. As to expression, expressed in skin, pancreas and keratinocytes.

Its subcellular location is the membrane. The polypeptide is Keratinocyte-associated protein 3 (KRTCAP3) (Homo sapiens (Human)).